The following is a 340-amino-acid chain: MSVLSPLIIRLCSPRGFCAGVDRAIQIVLLALKKYGAPVYVRHEIVHNRYVVEGLQQRGAIFVEELDEIPEEHRNQPVVFSAHGVPKSVPEQADRYNLFYLDATCPLVSKVHKQAMRHQRHGRHVILIGHAGHPEVIGTMGQLEKGAVTLIETIEDALHYQPDDPDKLGFVTQTTLSVEDTAGILDVLQRRFPALEPPAAESICYATTNRQNAVKAAALGSDLFLIVGAPNSSNSRRLVEVAERFGARQSILVQRADEIDFDRLGPLSVVSLSAGASAPEIIVDEIISAFRERYDVTIELSETVVEMETFLVNRELRNVILTPQDMAFVNGQSETLKNKN.

Cysteine 18 contacts [4Fe-4S] cluster. Residues histidine 47 and histidine 83 each coordinate (2E)-4-hydroxy-3-methylbut-2-enyl diphosphate. Histidine 47 and histidine 83 together coordinate dimethylallyl diphosphate. Isopentenyl diphosphate is bound by residues histidine 47 and histidine 83. Cysteine 105 is a [4Fe-4S] cluster binding site. Histidine 133 is a binding site for (2E)-4-hydroxy-3-methylbut-2-enyl diphosphate. Histidine 133 serves as a coordination point for dimethylallyl diphosphate. Histidine 133 lines the isopentenyl diphosphate pocket. Catalysis depends on glutamate 135, which acts as the Proton donor. Threonine 174 contacts (2E)-4-hydroxy-3-methylbut-2-enyl diphosphate. Cysteine 204 contributes to the [4Fe-4S] cluster binding site. Serine 232, serine 233, asparagine 234, and serine 277 together coordinate (2E)-4-hydroxy-3-methylbut-2-enyl diphosphate. 4 residues coordinate dimethylallyl diphosphate: serine 232, serine 233, asparagine 234, and serine 277. Isopentenyl diphosphate contacts are provided by serine 232, serine 233, asparagine 234, and serine 277.

It belongs to the IspH family. [4Fe-4S] cluster is required as a cofactor.

It catalyses the reaction isopentenyl diphosphate + 2 oxidized [2Fe-2S]-[ferredoxin] + H2O = (2E)-4-hydroxy-3-methylbut-2-enyl diphosphate + 2 reduced [2Fe-2S]-[ferredoxin] + 2 H(+). It carries out the reaction dimethylallyl diphosphate + 2 oxidized [2Fe-2S]-[ferredoxin] + H2O = (2E)-4-hydroxy-3-methylbut-2-enyl diphosphate + 2 reduced [2Fe-2S]-[ferredoxin] + 2 H(+). The protein operates within isoprenoid biosynthesis; dimethylallyl diphosphate biosynthesis; dimethylallyl diphosphate from (2E)-4-hydroxy-3-methylbutenyl diphosphate: step 1/1. It participates in isoprenoid biosynthesis; isopentenyl diphosphate biosynthesis via DXP pathway; isopentenyl diphosphate from 1-deoxy-D-xylulose 5-phosphate: step 6/6. In terms of biological role, catalyzes the conversion of 1-hydroxy-2-methyl-2-(E)-butenyl 4-diphosphate (HMBPP) into a mixture of isopentenyl diphosphate (IPP) and dimethylallyl diphosphate (DMAPP). Acts in the terminal step of the DOXP/MEP pathway for isoprenoid precursor biosynthesis. The chain is 4-hydroxy-3-methylbut-2-enyl diphosphate reductase from Bartonella quintana (strain Toulouse) (Rochalimaea quintana).